Here is a 756-residue protein sequence, read N- to C-terminus: 1,4-alpha-glucan branching enzyme GlgB (756 aa).

Asp425 (nucleophile) is an active-site residue. Glu478 (proton donor) is an active-site residue.

Belongs to the glycosyl hydrolase 13 family. GlgB subfamily. In terms of assembly, monomer.

It carries out the reaction Transfers a segment of a (1-&gt;4)-alpha-D-glucan chain to a primary hydroxy group in a similar glucan chain.. It participates in glycan biosynthesis; glycogen biosynthesis. Its function is as follows. Catalyzes the formation of the alpha-1,6-glucosidic linkages in glycogen by scission of a 1,4-alpha-linked oligosaccharide from growing alpha-1,4-glucan chains and the subsequent attachment of the oligosaccharide to the alpha-1,6 position. The sequence is that of 1,4-alpha-glucan branching enzyme GlgB from Cupriavidus necator (strain ATCC 17699 / DSM 428 / KCTC 22496 / NCIMB 10442 / H16 / Stanier 337) (Ralstonia eutropha).